The sequence spans 468 residues: MIFGGIKSMEKIYFIGINGIGMSGLAKIMKCKGYDVKGADICTNYVTEELLSMGIVVYNEHDEENVKGADYVIASTAIKESNPELSYAKNNGIEILKRGELLAKLLNRETGIAVAGTHGKTTTSSMLSAVMLSKDPTIVVGGILPEIKSNAKPGKSEYFIAEADESDNSFLFMNPKYAVITNIDADHLDVHGNLDNIKKSFIKFICHTQKEAIICLDCENLKEVVTRLPEEKTVTTYSIKDESANIFAKNIKIEDRKTIFELYINKELIGEFSLNIPGEHNIQNSLPVIYLAFKFGVSKEEIQEALNKFKGSKRRYDVLFDKELENGYGNKTKRVRIVDDYAHHPTEIKATLKAIKSIDTSRLVAIFQPHRYSRVHFLLDEFKDAFVNVDKVILLPIYAAGEKNEFNISSEELKEHINHNNVEVMNEWKDIKRYVSRVKKDSTYIFMGAGDISTLAHEIAEELEGMSE.

ATP is bound at residue 116–122; it reads GTHGKTT.

It belongs to the MurCDEF family.

It localises to the cytoplasm. It carries out the reaction UDP-N-acetyl-alpha-D-muramate + L-alanine + ATP = UDP-N-acetyl-alpha-D-muramoyl-L-alanine + ADP + phosphate + H(+). The protein operates within cell wall biogenesis; peptidoglycan biosynthesis. Functionally, cell wall formation. This Fusobacterium nucleatum subsp. nucleatum (strain ATCC 25586 / DSM 15643 / BCRC 10681 / CIP 101130 / JCM 8532 / KCTC 2640 / LMG 13131 / VPI 4355) protein is UDP-N-acetylmuramate--L-alanine ligase.